A 387-amino-acid polypeptide reads, in one-letter code: Small ribosomal subunit protein mS31 (387 aa).

Residues 1 to 56 constitute a mitochondrion transit peptide; it reads MLHRIPAFIRPRPFSGLPLSCGNREVSVAASVLPAAGSGAVRTENTIQRHFCTSRS. Disordered stretches follow at residues 59 to 83 and 203 to 228; these read SKKD…GEGK and KSPS…SSLS. Composition is skewed to polar residues over residues 66–76 and 207–217; these read VPANETSQKAA and MRVSSRPQHQI.

The protein belongs to the mitochondrion-specific ribosomal protein mS31 family. In terms of assembly, component of the mitochondrial ribosome small subunit (28S) which comprises a 12S rRNA and about 30 distinct proteins.

It is found in the mitochondrion. This is Small ribosomal subunit protein mS31 (Mrps31) from Rattus norvegicus (Rat).